We begin with the raw amino-acid sequence, 249 residues long: 15,16-dihydrobiliverdin:ferredoxin oxidoreductase (249 aa).

This sequence belongs to the HY2 family.

The enzyme catalyses 15,16-dihydrobiliverdin + oxidized 2[4Fe-4S]-[ferredoxin] = biliverdin IXalpha + reduced 2[4Fe-4S]-[ferredoxin] + 2 H(+). Catalyzes the two-electron reduction of biliverdin IX-alpha at the C15 methine bridge. In Prochlorococcus marinus (strain MIT 9303), this protein is 15,16-dihydrobiliverdin:ferredoxin oxidoreductase.